We begin with the raw amino-acid sequence, 113 residues long: Protein FAM27E3 (113 aa).

The segment at 1 to 113 is disordered; sequence MGIFQLLRDR…YTHRHTHRVL (113 aa). Positions 77–99 are enriched in basic and acidic residues; it reads QTDRERERNTQRLRDRERRENGR. Residues 100–113 are compositionally biased toward basic residues; the sequence is HTHTYTHRHTHRVL.

This sequence belongs to the FAM27 family.

The protein is Protein FAM27E3 (FAM27E3) of Homo sapiens (Human).